The following is a 438-amino-acid chain: Protein phosphatase 2C homolog 2 (438 aa).

One can recognise a PPM-type phosphatase domain in the interval 23–294 (IYGVSAMQGW…DNMTMVIIGF (272 aa)). Mn(2+)-binding residues include aspartate 67, glycine 68, aspartate 236, and aspartate 285. Positions 370–438 (VLTGSDDTEM…EKTPEESKKD (69 aa)) are disordered. The span at 375–387 (DDTEMFDNADEDK) shows a compositional bias: acidic residues. Basic and acidic residues predominate over residues 398-438 (GKTDAKEETEAKPAPEAESSKPADGSEKKQDEKTPEESKKD).

This sequence belongs to the PP2C family. The cofactor is Mg(2+). Mn(2+) is required as a cofactor.

It localises to the cytoplasm. The protein localises to the nucleus. The enzyme catalyses O-phospho-L-seryl-[protein] + H2O = L-seryl-[protein] + phosphate. It catalyses the reaction O-phospho-L-threonyl-[protein] + H2O = L-threonyl-[protein] + phosphate. Its function is as follows. Dephosphorylating regulator for many key proteins. Negatively regulates the endoplasmic reticulum unfolded protein response. In Hypocrea jecorina (strain QM6a) (Trichoderma reesei), this protein is Protein phosphatase 2C homolog 2.